A 223-amino-acid polypeptide reads, in one-letter code: Deoxyribose-phosphate aldolase 2 (223 aa).

Asp-92 (proton donor/acceptor) is an active-site residue. The active-site Schiff-base intermediate with acetaldehyde is Lys-154. The active-site Proton donor/acceptor is the Lys-183.

Belongs to the DeoC/FbaB aldolase family. DeoC type 1 subfamily.

The protein localises to the cytoplasm. The catalysed reaction is 2-deoxy-D-ribose 5-phosphate = D-glyceraldehyde 3-phosphate + acetaldehyde. It participates in carbohydrate degradation; 2-deoxy-D-ribose 1-phosphate degradation; D-glyceraldehyde 3-phosphate and acetaldehyde from 2-deoxy-alpha-D-ribose 1-phosphate: step 2/2. Functionally, catalyzes a reversible aldol reaction between acetaldehyde and D-glyceraldehyde 3-phosphate to generate 2-deoxy-D-ribose 5-phosphate. The protein is Deoxyribose-phosphate aldolase 2 of Oceanobacillus iheyensis (strain DSM 14371 / CIP 107618 / JCM 11309 / KCTC 3954 / HTE831).